A 271-amino-acid polypeptide reads, in one-letter code: Virulence regulon transcriptional activator VirF (271 aa).

One can recognise an HTH araC/xylS-type domain in the interval glutamate 167 to threonine 265. 2 consecutive DNA-binding regions (H-T-H motif) follow at residues serine 184–tyrosine 205 and isoleucine 232–phenylalanine 255.

Transcriptional activator of the Yersinia virulence regulon. This Yersinia enterocolitica serotype O:8 / biotype 1B (strain NCTC 13174 / 8081) protein is Virulence regulon transcriptional activator VirF (virF).